The primary structure comprises 115 residues: Protein Wnt-2 (115 aa).

A lipid anchor (O-palmitoleoyl serine; by PORCN) is attached at S1. A disulfide bond links C81 and C96. N82 carries N-linked (GlcNAc...) asparagine glycosylation.

Belongs to the Wnt family. Post-translationally, palmitoleoylation is required for efficient binding to frizzled receptors. Depalmitoleoylation leads to Wnt signaling pathway inhibition.

It is found in the secreted. The protein resides in the extracellular space. The protein localises to the extracellular matrix. Its function is as follows. Ligand for members of the frizzled family of seven transmembrane receptors. Probable developmental protein. May be a signaling molecule which affects the development of discrete regions of tissues. Is likely to signal over only few cell diameters. The chain is Protein Wnt-2 (WNT-2) from Strongylocentrotus purpuratus (Purple sea urchin).